A 477-amino-acid chain; its full sequence is Probable F-box protein At5g25300 (477 aa).

Residues 346–377 (VDMNKEDSQIEINEKETKINQEHDQSDETQAK) adopt a coiled-coil conformation. The 47-residue stretch at 412–458 (SPPWSELPGDILRSVFERLSFVDFQRAKQTCPIKRSKSNCLRLWLIT) folds into the F-box domain.

The polypeptide is Probable F-box protein At5g25300 (Arabidopsis thaliana (Mouse-ear cress)).